The sequence spans 378 residues: Alanine racemase (378 aa).

Lysine 40 acts as the Proton acceptor; specific for D-alanine in catalysis. Lysine 40 is modified (N6-(pyridoxal phosphate)lysine). Arginine 140 contacts substrate. Tyrosine 270 acts as the Proton acceptor; specific for L-alanine in catalysis. Methionine 317 lines the substrate pocket.

Belongs to the alanine racemase family. Pyridoxal 5'-phosphate serves as cofactor.

The enzyme catalyses L-alanine = D-alanine. The protein operates within amino-acid biosynthesis; D-alanine biosynthesis; D-alanine from L-alanine: step 1/1. Its function is as follows. Catalyzes the interconversion of L-alanine and D-alanine. May also act on other amino acids. The chain is Alanine racemase (alr) from Lacticaseibacillus paracasei (strain ATCC 334 / BCRC 17002 / CCUG 31169 / CIP 107868 / KCTC 3260 / NRRL B-441) (Lactobacillus paracasei).